The primary structure comprises 639 residues: 1-deoxy-D-xylulose-5-phosphate synthase (639 aa).

Thiamine diphosphate is bound by residues His79 and 120 to 122 (AHS). Position 151 (Asp151) interacts with Mg(2+). Thiamine diphosphate contacts are provided by residues 152–153 (GA), Asn180, Tyr289, and Glu371. Position 180 (Asn180) interacts with Mg(2+).

It belongs to the transketolase family. DXPS subfamily. As to quaternary structure, homodimer. Mg(2+) is required as a cofactor. It depends on thiamine diphosphate as a cofactor.

The catalysed reaction is D-glyceraldehyde 3-phosphate + pyruvate + H(+) = 1-deoxy-D-xylulose 5-phosphate + CO2. Its pathway is metabolic intermediate biosynthesis; 1-deoxy-D-xylulose 5-phosphate biosynthesis; 1-deoxy-D-xylulose 5-phosphate from D-glyceraldehyde 3-phosphate and pyruvate: step 1/1. Catalyzes the acyloin condensation reaction between C atoms 2 and 3 of pyruvate and glyceraldehyde 3-phosphate to yield 1-deoxy-D-xylulose-5-phosphate (DXP). In Rhizorhabdus wittichii (strain DSM 6014 / CCUG 31198 / JCM 15750 / NBRC 105917 / EY 4224 / RW1) (Sphingomonas wittichii), this protein is 1-deoxy-D-xylulose-5-phosphate synthase.